The chain runs to 374 residues: Amino acid binding protein (374 aa).

A signal peptide spans 1 to 27; the sequence is MSKKLFRKGILALAVSSVMGLSTHALA.

This sequence belongs to the leucine-binding protein family.

It localises to the periplasm. Its function is as follows. Binds primarily proteinogenic amino acids. The polypeptide is Amino acid binding protein (Pseudomonas aeruginosa (strain ATCC 15692 / DSM 22644 / CIP 104116 / JCM 14847 / LMG 12228 / 1C / PRS 101 / PAO1)).